The primary structure comprises 251 residues: Imidazole glycerol phosphate synthase subunit HisF (251 aa).

Catalysis depends on residues Asp11 and Asp130.

The protein belongs to the HisA/HisF family. In terms of assembly, heterodimer of HisH and HisF.

It localises to the cytoplasm. It carries out the reaction 5-[(5-phospho-1-deoxy-D-ribulos-1-ylimino)methylamino]-1-(5-phospho-beta-D-ribosyl)imidazole-4-carboxamide + L-glutamine = D-erythro-1-(imidazol-4-yl)glycerol 3-phosphate + 5-amino-1-(5-phospho-beta-D-ribosyl)imidazole-4-carboxamide + L-glutamate + H(+). The protein operates within amino-acid biosynthesis; L-histidine biosynthesis; L-histidine from 5-phospho-alpha-D-ribose 1-diphosphate: step 5/9. In terms of biological role, IGPS catalyzes the conversion of PRFAR and glutamine to IGP, AICAR and glutamate. The HisF subunit catalyzes the cyclization activity that produces IGP and AICAR from PRFAR using the ammonia provided by the HisH subunit. The protein is Imidazole glycerol phosphate synthase subunit HisF of Natranaerobius thermophilus (strain ATCC BAA-1301 / DSM 18059 / JW/NM-WN-LF).